The following is a 319-amino-acid chain: tRNA uridine(34) hydroxylase (319 aa).

A Rhodanese domain is found at 125-219 (LDENTVVIDA…YGKDPEVQGD (95 aa)). Residue Cys179 is the Cysteine persulfide intermediate of the active site.

Belongs to the TrhO family.

The catalysed reaction is uridine(34) in tRNA + AH2 + O2 = 5-hydroxyuridine(34) in tRNA + A + H2O. Functionally, catalyzes oxygen-dependent 5-hydroxyuridine (ho5U) modification at position 34 in tRNAs. The sequence is that of tRNA uridine(34) hydroxylase from Lactococcus lactis subsp. lactis (strain IL1403) (Streptococcus lactis).